Consider the following 181-residue polypeptide: Bifunctional protein PyrR (181 aa).

The PRPP-binding motif lies at 100 to 112; the sequence is VVLVDDVIYTGRT.

The protein belongs to the purine/pyrimidine phosphoribosyltransferase family. PyrR subfamily. As to quaternary structure, homodimer and homohexamer; in equilibrium.

The catalysed reaction is UMP + diphosphate = 5-phospho-alpha-D-ribose 1-diphosphate + uracil. Functionally, regulates transcriptional attenuation of the pyrimidine nucleotide (pyr) operon by binding in a uridine-dependent manner to specific sites on pyr mRNA. This disrupts an antiterminator hairpin in the RNA and favors formation of a downstream transcription terminator, leading to a reduced expression of downstream genes. Also displays a weak uracil phosphoribosyltransferase activity which is not physiologically significant. The sequence is that of Bifunctional protein PyrR from Pelotomaculum thermopropionicum (strain DSM 13744 / JCM 10971 / SI).